Reading from the N-terminus, the 214-residue chain is Dual specificity phosphatase 29 (214 aa).

Positions 46 to 194 constitute a Tyrosine-protein phosphatase domain; it reads HVNEVWPNLY…LRELDIELAL (149 aa). Residue 138-145 participates in substrate binding; sequence HCAMGRSR. Cys139 (phosphocysteine intermediate) is an active-site residue.

It belongs to the protein-tyrosine phosphatase family. Non-receptor class dual specificity subfamily.

It is found in the cytoplasm. The protein resides in the nucleus. The catalysed reaction is O-phospho-L-tyrosyl-[protein] + H2O = L-tyrosyl-[protein] + phosphate. The enzyme catalyses O-phospho-L-seryl-[protein] + H2O = L-seryl-[protein] + phosphate. It catalyses the reaction O-phospho-L-threonyl-[protein] + H2O = L-threonyl-[protein] + phosphate. In terms of biological role, dual specificity phosphatase able to dephosphorylate phosphotyrosine, phosphoserine and phosphothreonine residues within the same substrate, with a preference for phosphotyrosine as a substrate. Involved in the modulation of AMPK and MAPK1/2 signaling pathways. This is Dual specificity phosphatase 29 (DUSP29) from Gallus gallus (Chicken).